We begin with the raw amino-acid sequence, 284 residues long: MASGLSEIGSTKMFDGYNKRYKHFSETLGCSMTFSIYFPPSASSSHKSPVLYWLSGLTCTDENFIIKSGAQRAASTHGIALVAPDTSPRGLNVEGEADSYDFGVGAGFYLNATQEKWKNWRMYDYVVKELPKLLSENFSQLDTTKASISGHSMGGHGALTIYLRNLDKYKSVSAFAPITNPINCAWGQKAFTNYLGDNKAAWEEYDATCLISKYNNLSATILIDQGENDQFYPDQLLPSKFEEACKKVNAPLLLRLHPGYDHSYYFIATFIEDHISHHAQALEL.

Residue Ala-2 is modified to N-acetylalanine. Substrate-binding residues include Asn-63 and Lys-67. Catalysis depends on charge relay system residues Ser-152, Asp-229, and His-262.

It belongs to the esterase D family. As to quaternary structure, homodimer.

The catalysed reaction is S-formylglutathione + H2O = formate + glutathione + H(+). With respect to regulation, activity toward p-nitrophenyl acetate inhibited by N-ethylmaleimide, 10-(fluoroethoxyphosphinyl)-N-(biotinamidopentyl)decanamide (FP-biotin), iodoacetamide, CuCl(2) and ZnSO(4), but not by phenylmethylsulfonyl fluoride, EDTA, Mg(2+), Mn(2+), Ca(2+) or paraoxon, an organo-phosphate inhibitor of serine hydrolases. Functionally, serine hydrolase which catalyzes the hydrolysis of S-formylglutathione to glutathione and formic acid. Also hydrolyzes S-acetylglutathione and a range of carboxyesters in vitro. Involved in the detoxification of formaldehyde. The polypeptide is S-formylglutathione hydrolase (SFGH) (Arabidopsis thaliana (Mouse-ear cress)).